Consider the following 1160-residue polypeptide: AF4/FMR2 family member 4 (1160 aa).

Positions 1–19 are enriched in basic and acidic residues; it reads MNREDRNVLRMKERERRNQ. Disordered regions lie at residues 1-42, 78-289, 322-908, and 1031-1070; these read MNRE…YKVT, PKPA…SKAH, WPPP…FDDR, and NSYS…SSGG. Polar residues predominate over residues 115 to 128; it reads PSTSQSQKRSSALQ. Position 120 is a phosphoserine (S120). Low complexity predominate over residues 172–189; the sequence is RSSSPGKPQAVSSLSSSH. Residues 193-212 are compositionally biased toward basic and acidic residues; that stretch reads HGNDHHSKEHQRSKSPRDPD. S207 is modified (phosphoserine). A compositionally biased stretch (low complexity) spans 229-247; it reads SSQSFPPSLMSKSSSMLQK. Polar residues-rich tracts occupy residues 268 to 280 and 360 to 370; these read EHYS…NSMT and YSTAKTSNGHQ. S382, S383, S384, and S387 each carry phosphoserine. Residues 398–407 show a composition bias toward polar residues; sequence PRSTPGSNSE. Residues 408 to 424 show a composition bias toward basic and acidic residues; it reads PSHHNSEGADNSRDDSS. The segment covering 425 to 457 has biased composition (low complexity); that stretch reads SHSGSESSSGSDSESESSSSDSEANEPSQSASP. Phosphoserine is present on residues S482, S485, and S486. 3 stretches are compositionally biased toward polar residues: residues 483 to 496, 505 to 523, and 544 to 555; these read PASS…SSQA, GTAS…SSAT, and SPAQSDSTTQRR. Residue S544 is modified to Phosphoserine. The span at 563–581 shows a compositional bias: basic and acidic residues; sequence KKPEKSAAEEPRGGLKIES. K578 is covalently cross-linked (Glycyl lysine isopeptide (Lys-Gly) (interchain with G-Cter in SUMO2)). Positions 594 to 607 are enriched in basic residues; that stretch reads SRHKAATKGSRKPN. Over residues 608-622 the composition is skewed to basic and acidic residues; it reads IKKESKSSPRPTAEK. Over residues 641 to 657 the composition is skewed to low complexity; that stretch reads TDTSSSDSDGSESLPPS. S666 is modified (phosphoserine). The residue at position 669 (T669) is a Phosphothreonine. 4 positions are modified to phosphoserine: S675, S689, S698, and S701. Phosphotyrosine is present on Y707. Basic and acidic residues-rich tracts occupy residues 725-756, 764-784, and 794-806; these read PYKE…EKAS, KNDD…DKNS, and ESSK…EKDL. S809 carries the post-translational modification Phosphoserine. K817 is subject to N6-acetyllysine. S831 is subject to Phosphoserine. 2 stretches are compositionally biased toward low complexity: residues 831-859 and 880-895; these read SQSS…SSTA and PNSS…TSES. Residues S1040, S1052, S1055, and S1059 each carry the phosphoserine modification. Low complexity predominate over residues 1059 to 1070; it reads SPGNSGSYSSGG.

It belongs to the AF4 family. As to quaternary structure, component of the super elongation complex (SEC), at least composed of EAF1, EAF2, CDK9, MLLT3/AF9, AFF (AFF1 or AFF4), the P-TEFb complex and ELL (ELL, ELL2 or ELL3). Interacts with ELL2; the interaction is direct and leads to stabilize ELL2 and prevent ELL2 ubiquitination and degradation. Interacts with ELL3; the interaction is direct. Post-translationally, dephosphorylated at Ser-544 by the PNUTS-PP1 complex, promoting RNA polymerase II transcription pause-release. Highly expressed in testis by Sertoli cells, and at low levels in other tissues.

The protein resides in the nucleus. It localises to the chromosome. In terms of biological role, key component of the super elongation complex (SEC), a complex required to increase the catalytic rate of RNA polymerase II transcription by suppressing transient pausing by the polymerase at multiple sites along the DNA. In the SEC complex, AFF4 acts as a central scaffold that recruits other factors through direct interactions with ELL proteins (ELL, ELL2 or ELL3) and the P-TEFb complex. In Mus musculus (Mouse), this protein is AF4/FMR2 family member 4 (Aff4).